A 236-amino-acid chain; its full sequence is 2-C-methyl-D-erythritol 4-phosphate cytidylyltransferase (236 aa).

Belongs to the IspD/TarI cytidylyltransferase family. IspD subfamily. Homodimer.

It catalyses the reaction 2-C-methyl-D-erythritol 4-phosphate + CTP + H(+) = 4-CDP-2-C-methyl-D-erythritol + diphosphate. It participates in isoprenoid biosynthesis; isopentenyl diphosphate biosynthesis via DXP pathway; isopentenyl diphosphate from 1-deoxy-D-xylulose 5-phosphate: step 2/6. In terms of biological role, catalyzes the formation of 4-diphosphocytidyl-2-C-methyl-D-erythritol from CTP and 2-C-methyl-D-erythritol 4-phosphate (MEP). The sequence is that of 2-C-methyl-D-erythritol 4-phosphate cytidylyltransferase from Salmonella heidelberg (strain SL476).